The chain runs to 255 residues: Tryptophan synthase alpha chain (255 aa).

Catalysis depends on proton acceptor residues Glu44 and Asp55.

It belongs to the TrpA family. In terms of assembly, tetramer of two alpha and two beta chains.

It carries out the reaction (1S,2R)-1-C-(indol-3-yl)glycerol 3-phosphate + L-serine = D-glyceraldehyde 3-phosphate + L-tryptophan + H2O. It functions in the pathway amino-acid biosynthesis; L-tryptophan biosynthesis; L-tryptophan from chorismate: step 5/5. Functionally, the alpha subunit is responsible for the aldol cleavage of indoleglycerol phosphate to indole and glyceraldehyde 3-phosphate. The sequence is that of Tryptophan synthase alpha chain from Dehalococcoides mccartyi (strain ATCC BAA-2100 / JCM 16839 / KCTC 5957 / BAV1).